Reading from the N-terminus, the 319-residue chain is ATP-dependent 6-phosphofructokinase (319 aa).

Gly11 lines the ATP pocket. 21–25 (RAVTR) provides a ligand contact to ADP. ATP is bound by residues 72-73 (RF) and 102-105 (GDGS). Asp103 is a Mg(2+) binding site. Position 125–127 (125–127 (SID)) interacts with substrate. Residue Asp127 is the Proton acceptor of the active site. Arg154 serves as a coordination point for ADP. Substrate is bound by residues Arg162 and 169–171 (MGR). Residues 185-187 (GAD) and 213-215 (KKH) contribute to the ADP site. Substrate-binding positions include Glu222, Arg243, and 249-252 (HMQR).

This sequence belongs to the phosphofructokinase type A (PFKA) family. ATP-dependent PFK group I subfamily. Prokaryotic clade 'B1' sub-subfamily. In terms of assembly, homotetramer. Requires Mg(2+) as cofactor.

The protein localises to the cytoplasm. It carries out the reaction beta-D-fructose 6-phosphate + ATP = beta-D-fructose 1,6-bisphosphate + ADP + H(+). It functions in the pathway carbohydrate degradation; glycolysis; D-glyceraldehyde 3-phosphate and glycerone phosphate from D-glucose: step 3/4. Allosterically activated by ADP and other diphosphonucleosides, and allosterically inhibited by phosphoenolpyruvate. Catalyzes the phosphorylation of D-fructose 6-phosphate to fructose 1,6-bisphosphate by ATP, the first committing step of glycolysis. This is ATP-dependent 6-phosphofructokinase from Lactobacillus johnsonii (strain CNCM I-12250 / La1 / NCC 533).